A 517-amino-acid chain; its full sequence is Ladinin-1 (517 aa).

The tract at residues Met1–Thr401 is disordered. Position 38 is a phosphoserine (Ser38). Residues Leu48–Ala58 are compositionally biased toward polar residues. 4 positions are modified to phosphoserine: Ser64, Ser78, Ser121, and Ser123. Positions Asn120–Pro131 are enriched in polar residues. 2 stretches are compositionally biased toward basic and acidic residues: residues Ser134 to Arg151 and Leu161 to Pro174. SEK repeat units follow at residues Ser203 to Lys205, Ser209 to Lys211, Ser215 to Lys217, Ser221 to Lys223, Ser227 to Lys229, Ser239 to Lys241, Ser257 to Lys259, and Ser269 to Lys271. Positions Ser203–Lys271 are 8 X SEK repeats. The span at Ala219–Leu233 shows a compositional bias: basic and acidic residues. Ser347, Ser356, and Ser394 each carry phosphoserine. Over residues Ser355–Thr373 the composition is skewed to polar residues. Arg424 is modified (omega-N-methylarginine). The disordered stretch occupies residues Arg481–Val517. A Phosphoserine modification is found at Ser485. The span at Gln494–Val517 shows a compositional bias: polar residues.

The protein resides in the secreted. It is found in the extracellular space. The protein localises to the extracellular matrix. It localises to the basement membrane. Functionally, anchoring filament protein which is a component of the basement membrane zone. In Homo sapiens (Human), this protein is Ladinin-1 (LAD1).